Here is a 789-residue protein sequence, read N- to C-terminus: LPS-assembly protein LptD (789 aa).

Residues 1 to 39 (MPPRQLSQTTPSCAVVPRKRRLVAALIAVPGLMPALAHA) form the signal peptide.

The protein belongs to the LptD family. As to quaternary structure, component of the lipopolysaccharide transport and assembly complex. Interacts with LptE and LptA.

Its subcellular location is the cell outer membrane. In terms of biological role, together with LptE, is involved in the assembly of lipopolysaccharide (LPS) at the surface of the outer membrane. The chain is LPS-assembly protein LptD from Paraburkholderia xenovorans (strain LB400).